We begin with the raw amino-acid sequence, 161 residues long: Cyclic pyranopterin monophosphate synthase (161 aa).

Substrate contacts are provided by residues 76–78 (MCH) and 114–115 (ME). Asp-129 is an active-site residue.

It belongs to the MoaC family. In terms of assembly, homohexamer; trimer of dimers.

It carries out the reaction (8S)-3',8-cyclo-7,8-dihydroguanosine 5'-triphosphate = cyclic pyranopterin phosphate + diphosphate. Its pathway is cofactor biosynthesis; molybdopterin biosynthesis. Catalyzes the conversion of (8S)-3',8-cyclo-7,8-dihydroguanosine 5'-triphosphate to cyclic pyranopterin monophosphate (cPMP). The polypeptide is Cyclic pyranopterin monophosphate synthase (Clostridium acetobutylicum (strain ATCC 824 / DSM 792 / JCM 1419 / IAM 19013 / LMG 5710 / NBRC 13948 / NRRL B-527 / VKM B-1787 / 2291 / W)).